The sequence spans 387 residues: Cystathionine gamma-lyase (387 aa).

Residues Arg-53, Tyr-105, and Arg-110 each contribute to the substrate site. Lys-202 carries the post-translational modification N6-(pyridoxal phosphate)lysine. Substrate is bound at residue Glu-329.

Belongs to the trans-sulfuration enzymes family. In terms of assembly, homotetramer. Interacts with CALM in a calcium-dependent manner. The cofactor is pyridoxal 5'-phosphate.

Its subcellular location is the cytoplasm. The enzyme catalyses L,L-cystathionine + H2O = 2-oxobutanoate + L-cysteine + NH4(+). It catalyses the reaction L-cysteine + H2O = hydrogen sulfide + pyruvate + NH4(+) + H(+). It carries out the reaction L-homocysteine + H2O = 2-oxobutanoate + hydrogen sulfide + NH4(+) + H(+). The catalysed reaction is L-homoserine = 2-oxobutanoate + NH4(+). It participates in amino-acid biosynthesis; L-cysteine biosynthesis; L-cysteine from L-homocysteine and L-serine: step 2/2. Functionally, catalyzes the last step in the trans-sulfuration pathway from L-methionine to L-cysteine in a pyridoxal-5'-phosphate (PLP)-dependent manner, which consists on cleaving the L,L-cystathionine molecule into L-cysteine, ammonia and 2-oxobutanoate. Part of the L-cysteine derived from the trans-sulfuration pathway is utilized for biosynthesis of the ubiquitous antioxidant glutathione. Besides its role in the conversion of L-cystathionine into L-cysteine, it utilizes L-cysteine and L-homocysteine as substrates (at much lower rates than L,L-cystathionine) to produce the endogenous gaseous signaling molecule hydrogen sulfide (H2S). In Dictyostelium discoideum (Social amoeba), this protein is Cystathionine gamma-lyase (cysA).